Reading from the N-terminus, the 81-residue chain is Defensin-like protein 130 (81 aa).

The N-terminal stretch at 1–21 (MTKNTSLTIFMVVLVIGMLYT) is a signal peptide. 4 disulfides stabilise this stretch: Cys32–Cys81, Cys41–Cys63, Cys46–Cys75, and Cys50–Cys77.

It belongs to the DEFL family.

The protein resides in the secreted. The sequence is that of Defensin-like protein 130 (LCR28) from Arabidopsis thaliana (Mouse-ear cress).